The primary structure comprises 127 residues: Small ribosomal subunit protein eS8 (127 aa).

The segment at 1–24 (MKWQGKSARKPTGGRLVPARGKRK) is disordered.

It belongs to the eukaryotic ribosomal protein eS8 family. In terms of assembly, part of the 30S ribosomal subunit.

The chain is Small ribosomal subunit protein eS8 from Methanothrix thermoacetophila (strain DSM 6194 / JCM 14653 / NBRC 101360 / PT) (Methanosaeta thermophila).